Consider the following 440-residue polypeptide: Thymidine phosphorylase (440 aa).

Belongs to the thymidine/pyrimidine-nucleoside phosphorylase family. Homodimer.

The enzyme catalyses thymidine + phosphate = 2-deoxy-alpha-D-ribose 1-phosphate + thymine. It participates in pyrimidine metabolism; dTMP biosynthesis via salvage pathway; dTMP from thymine: step 1/2. In terms of biological role, the enzymes which catalyze the reversible phosphorolysis of pyrimidine nucleosides are involved in the degradation of these compounds and in their utilization as carbon and energy sources, or in the rescue of pyrimidine bases for nucleotide synthesis. The polypeptide is Thymidine phosphorylase (Salmonella paratyphi A (strain ATCC 9150 / SARB42)).